A 196-amino-acid chain; its full sequence is Anthranilate synthase component 2 (196 aa).

The 194-residue stretch at 3 to 196 (NILLLDNFDS…INWASLKYKG (194 aa)) folds into the Glutamine amidotransferase type-1 domain. Residue 57-59 (GPS) participates in L-glutamine binding. The active-site Nucleophile; for GATase activity is C84. L-glutamine-binding positions include Q88 and 134 to 135 (SL). Residues H170 and E172 each act as for GATase activity in the active site.

Heterotetramer consisting of two non-identical subunits: a beta subunit (TrpG) and a large alpha subunit (TrpE).

The catalysed reaction is chorismate + L-glutamine = anthranilate + pyruvate + L-glutamate + H(+). Its pathway is amino-acid biosynthesis; L-tryptophan biosynthesis; L-tryptophan from chorismate: step 1/5. Functionally, part of a heterotetrameric complex that catalyzes the two-step biosynthesis of anthranilate, an intermediate in the biosynthesis of L-tryptophan. In the first step, the glutamine-binding beta subunit (TrpG) of anthranilate synthase (AS) provides the glutamine amidotransferase activity which generates ammonia as a substrate that, along with chorismate, is used in the second step, catalyzed by the large alpha subunit of AS (TrpE) to produce anthranilate. In the absence of TrpG, TrpE can synthesize anthranilate directly from chorismate and high concentrations of ammonia. This is Anthranilate synthase component 2 (trpG) from Buchnera aphidicola subsp. Schizaphis graminum (strain Sg).